We begin with the raw amino-acid sequence, 222 residues long: Cytidylate kinase (222 aa).

Gly10 to Val18 is an ATP binding site.

Belongs to the cytidylate kinase family. Type 1 subfamily.

The protein resides in the cytoplasm. It carries out the reaction CMP + ATP = CDP + ADP. It catalyses the reaction dCMP + ATP = dCDP + ADP. In Mycoplasma capricolum subsp. capricolum (strain California kid / ATCC 27343 / NCTC 10154), this protein is Cytidylate kinase.